A 23-amino-acid chain; its full sequence is Conotoxin Tx6.5 (23 aa).

3 disulfides stabilise this stretch: Cys-2-Cys-10, Cys-5-Cys-15, and Cys-9-Cys-20. 4-hydroxyproline; partial is present on Pro-12.

It belongs to the conotoxin U superfamily. Expressed by the venom duct.

The protein localises to the secreted. In Conus textile (Cloth-of-gold cone), this protein is Conotoxin Tx6.5.